Consider the following 158-residue polypeptide: MDARTIIESLTGKFPEAISEAGIESPIRIRAYVDKDKAKEVCEYLKGSLQFDHLCSVSGVDYPQRDELEAVYHIASYDHPVVLMLKARLPRDSPEIESVVSVYWNANWYERETYELYGIFFKNHPELKPLVLPDDMLGEWPLRKDYEGFPNRTARNLV.

It belongs to the complex I 30 kDa subunit family. As to quaternary structure, the FPO complex is composed of at least 13 different subunits.

The protein resides in the cell membrane. It catalyses the reaction methanophenazine + reduced coenzyme F420-(gamma-L-Glu)(n) = dihydromethanophenazine + oxidized coenzyme F420-(gamma-L-Glu)(n) + H(+). In terms of biological role, component of the F(420)H(2) dehydrogenase (FPO complex) which is part of the energy-conserving F(420)H(2):heterodisulfide oxidoreductase system. The membrane-bound electron transfer system of the complex plays an important role in the metabolism of methylotrophic methanogens when the organisms grow on methanol or methylamines. Catalyzes the oxidation of methanophenazine to dihydromethanophenazine. It shuttles electrons from F(420)H(2), via FAD and iron-sulfur (Fe-S) centers, to methanophenazine (an electron carrier in the membrane). It couples the redox reaction to proton translocation (for every two electrons transferred, two hydrogen ions are translocated across the cytoplasmic membrane), and thus conserves the redox energy in a proton gradient. It also catalyzes the oxidation of F(420)H(2) with quinones such as 2,3-dimethyl-1,4-naphthoquinone, 2-methyl-1,4-naphthoquinone and tetramethyl-p-benzoquinone. This chain is F(420)H(2) dehydrogenase subunit C (fpoC), found in Methanosarcina mazei (strain ATCC BAA-159 / DSM 3647 / Goe1 / Go1 / JCM 11833 / OCM 88) (Methanosarcina frisia).